A 211-amino-acid chain; its full sequence is Pyridoxine/pyridoxamine 5'-phosphate oxidase (211 aa).

Substrate-binding positions include 7-10 (RREY) and Lys-65. Residues 60-65 (RIVLLK), 75-76 (YT), Arg-81, Lys-82, and Gln-104 each bind FMN. The substrate site is built by Tyr-122, Arg-126, and Ser-130. FMN is bound by residues 139-140 (QS) and Trp-184. Substrate is bound at residue 190–192 (RLH). Arg-194 contacts FMN.

This sequence belongs to the pyridoxamine 5'-phosphate oxidase family. Homodimer. The cofactor is FMN.

The enzyme catalyses pyridoxamine 5'-phosphate + O2 + H2O = pyridoxal 5'-phosphate + H2O2 + NH4(+). It carries out the reaction pyridoxine 5'-phosphate + O2 = pyridoxal 5'-phosphate + H2O2. It participates in cofactor metabolism; pyridoxal 5'-phosphate salvage; pyridoxal 5'-phosphate from pyridoxamine 5'-phosphate: step 1/1. The protein operates within cofactor metabolism; pyridoxal 5'-phosphate salvage; pyridoxal 5'-phosphate from pyridoxine 5'-phosphate: step 1/1. In terms of biological role, catalyzes the oxidation of either pyridoxine 5'-phosphate (PNP) or pyridoxamine 5'-phosphate (PMP) into pyridoxal 5'-phosphate (PLP). In Photobacterium profundum (strain SS9), this protein is Pyridoxine/pyridoxamine 5'-phosphate oxidase.